The chain runs to 128 residues: Flagellar assembly factor FliW (128 aa).

It belongs to the FliW family. In terms of assembly, interacts with translational regulator CsrA and flagellin(s).

The protein localises to the cytoplasm. Functionally, acts as an anti-CsrA protein, binds CsrA and prevents it from repressing translation of its target genes, one of which is flagellin. Binds to flagellin and participates in the assembly of the flagellum. The protein is Flagellar assembly factor FliW of Campylobacter fetus subsp. fetus (strain 82-40).